We begin with the raw amino-acid sequence, 518 residues long: Cytochrome P450 82E3 (518 aa).

Residues Val-2–Trp-22 traverse the membrane as a helical segment. Lys-254 is covalently cross-linked (Glycyl lysine isopeptide (Lys-Gly) (interchain with G-Cter in ubiquitin)). Residue Cys-458 coordinates heme.

The protein belongs to the cytochrome P450 family. CYP82E2 subfamily. The cofactor is heme. In terms of tissue distribution, expressed at low levels in green leaves.

The protein localises to the membrane. The protein operates within alkaloid biosynthesis; nicotine biosynthesis. In terms of biological role, no nicotine N-demethylase activity. The protein is Cytochrome P450 82E3 of Nicotiana tabacum (Common tobacco).